Reading from the N-terminus, the 156-residue chain is ATP synthase subunit b (156 aa).

The helical transmembrane segment at 7 to 27 (LIGQTVAFIIFVWFCMKFVWP) threads the bilayer.

It belongs to the ATPase B chain family. In terms of assembly, F-type ATPases have 2 components, F(1) - the catalytic core - and F(0) - the membrane proton channel. F(1) has five subunits: alpha(3), beta(3), gamma(1), delta(1), epsilon(1). F(0) has three main subunits: a(1), b(2) and c(10-14). The alpha and beta chains form an alternating ring which encloses part of the gamma chain. F(1) is attached to F(0) by a central stalk formed by the gamma and epsilon chains, while a peripheral stalk is formed by the delta and b chains.

The protein resides in the cell inner membrane. F(1)F(0) ATP synthase produces ATP from ADP in the presence of a proton or sodium gradient. F-type ATPases consist of two structural domains, F(1) containing the extramembraneous catalytic core and F(0) containing the membrane proton channel, linked together by a central stalk and a peripheral stalk. During catalysis, ATP synthesis in the catalytic domain of F(1) is coupled via a rotary mechanism of the central stalk subunits to proton translocation. Its function is as follows. Component of the F(0) channel, it forms part of the peripheral stalk, linking F(1) to F(0). The sequence is that of ATP synthase subunit b from Shewanella sp. (strain MR-4).